The primary structure comprises 289 residues: Phospholipase A1 (289 aa).

The N-terminal stretch at 1 to 20 is a signal peptide; sequence MRAILRGLLPATLLPLAAYA. The Periplasmic portion of the chain corresponds to 21-52; sequence QEATIKEVHDAPAVRGSIIANMLQEHDNPFTL. Residues 53 to 65 traverse the membrane as a beta stranded segment; it reads YPYDTNYLIYTNT. Topologically, residues 66-84 are extracellular; that stretch reads SDLNKEAISTYNWSENARK. A beta stranded transmembrane segment spans residues 85–99; the sequence is DEVKFQLSLAFPLWR. Topologically, residues 100-105 are periplasmic; that stretch reads GILGPN. Residues 106 to 118 form a beta stranded membrane-spanning segment; the sequence is SVLGASYTQKSWW. At 119–128 the chain is on the extracellular side; the sequence is QLSNSKESSP. S126 lines the Ca(2+) pocket. The chain crosses the membrane as a beta stranded span at residues 129–148; sequence FRETNYEPQLFLGFATDYRF. The Periplasmic segment spans residues 149–150; the sequence is AG. The chain crosses the membrane as a beta stranded span at residues 151-164; the sequence is WTLRDVEMGYNHDS. Residue H162 is the Proton acceptor of the active site. S164 (nucleophile) is an active-site residue. Residues 165–173 are Extracellular-facing; that stretch reads NGRSDPTSR. 2 residues coordinate Ca(2+): R167 and S172. A beta stranded membrane pass occupies residues 174–186; it reads SWNRLYTRLMAEN. Residues 187 to 188 lie on the Periplasmic side of the membrane; the sequence is GN. The beta stranded transmembrane segment at 189-198 threads the bilayer; the sequence is WLVEVKPWYV. At 199–216 the chain is on the extracellular side; sequence IGSTDDNPDITKYMGYYQ. D204 serves as a coordination point for Ca(2+). Residues 217–223 traverse the membrane as a beta stranded segment; sequence LKIGYHL. The Periplasmic portion of the chain corresponds to 224-225; it reads GE. The chain crosses the membrane as a beta stranded span at residues 226-234; that stretch reads AVLSAKGQY. The Extracellular portion of the chain corresponds to 235–241; it reads NWNTGYG. Residues 242 to 250 traverse the membrane as a beta stranded segment; that stretch reads GAEVGLSYP. At 251 to 255 the chain is on the periplasmic side; that stretch reads VTKHV. The chain crosses the membrane as a beta stranded span at residues 256 to 265; the sequence is RLYTQVYSGY. Topologically, residues 266–274 are extracellular; the sequence is GESLIDYNF. The beta stranded transmembrane segment at 275 to 286 threads the bilayer; sequence NQTRVGVGVMLN. The Periplasmic segment spans residues 287 to 289; that stretch reads DIF.

It belongs to the phospholipase A1 family. Homodimer; dimerization is reversible, and the dimeric form is the active one. Requires Ca(2+) as cofactor.

It localises to the cell outer membrane. The catalysed reaction is a 1,2-diacyl-sn-glycero-3-phosphocholine + H2O = a 2-acyl-sn-glycero-3-phosphocholine + a fatty acid + H(+). It carries out the reaction a 1,2-diacyl-sn-glycero-3-phosphocholine + H2O = a 1-acyl-sn-glycero-3-phosphocholine + a fatty acid + H(+). Its function is as follows. Hydrolysis of phosphatidylcholine with phospholipase A2 (EC 3.1.1.4) and phospholipase A1 (EC 3.1.1.32) activities. The sequence is that of Phospholipase A1 (pldA) from Salmonella typhi.